The primary structure comprises 168 residues: SPbeta prophage-derived uncharacterized protein YonX (168 aa).

A coiled-coil region spans residues 1–53; that stretch reads MNAQLFNLESRLDELENEINTQYCELDTNLDALKSNRIELESQLEKFESSLTN.

The protein is SPbeta prophage-derived uncharacterized protein YonX (yonX) of Bacillus subtilis (strain 168).